Consider the following 332-residue polypeptide: UPF0194 membrane protein YbhG (332 aa).

The N-terminal stretch at 1–16 is a signal peptide; that stretch reads MMKKPVVIGLAVVVLA. A coiled-coil region spans residues 108–209; it reads EEIAQAAAAV…LNLQDSTLIA (102 aa).

Belongs to the UPF0194 family.

The protein localises to the periplasm. This is UPF0194 membrane protein YbhG from Shigella boydii serotype 4 (strain Sb227).